The sequence spans 897 residues: Alanine--tRNA ligase (897 aa).

Zn(2+) contacts are provided by histidine 581, histidine 585, cysteine 684, and histidine 688.

This sequence belongs to the class-II aminoacyl-tRNA synthetase family. Zn(2+) is required as a cofactor.

It is found in the cytoplasm. It catalyses the reaction tRNA(Ala) + L-alanine + ATP = L-alanyl-tRNA(Ala) + AMP + diphosphate. Functionally, catalyzes the attachment of alanine to tRNA(Ala) in a two-step reaction: alanine is first activated by ATP to form Ala-AMP and then transferred to the acceptor end of tRNA(Ala). Also edits incorrectly charged Ser-tRNA(Ala) and Gly-tRNA(Ala) via its editing domain. The sequence is that of Alanine--tRNA ligase from Mycobacterium sp. (strain JLS).